A 386-amino-acid chain; its full sequence is Tubulin beta-1 chain (386 aa).

GTP is bound by residues glutamate 7, serine 76, glycine 80, threonine 81, glycine 82, asparagine 142, and asparagine 164. Residue glutamate 7 participates in Mg(2+) binding. The disordered stretch occupies residues 363–386 (YQDATADEEGEYEDEEEDLQAEDM). Residues 367–386 (TADEEGEYEDEEEDLQAEDM) show a composition bias toward acidic residues.

It belongs to the tubulin family. In terms of assembly, dimer of alpha and beta chains. A typical microtubule is a hollow water-filled tube with an outer diameter of 25 nm and an inner diameter of 15 nM. Alpha-beta heterodimers associate head-to-tail to form protofilaments running lengthwise along the microtubule wall with the beta-tubulin subunit facing the microtubule plus end conferring a structural polarity. Microtubules usually have 13 protofilaments but different protofilament numbers can be found in some organisms and specialized cells. It depends on Mg(2+) as a cofactor.

It is found in the cytoplasm. Its subcellular location is the cytoskeleton. In terms of biological role, tubulin is the major constituent of microtubules, a cylinder consisting of laterally associated linear protofilaments composed of alpha- and beta-tubulin heterodimers. Microtubules grow by the addition of GTP-tubulin dimers to the microtubule end, where a stabilizing cap forms. Below the cap, tubulin dimers are in GDP-bound state, owing to GTPase activity of alpha-tubulin. This chain is Tubulin beta-1 chain (TUBB1), found in Avena sativa (Oat).